The following is a 144-amino-acid chain: Large ribosomal subunit protein uL15 (144 aa).

A disordered region spans residues 1–51 (MRLNTIKPGAGSKSAGKRVGRGIGSGLGKTCGRGHKGQKSRAGGFHKVGFE). A compositionally biased stretch (gly residues) spans 21-31 (RGIGSGLGKTC).

It belongs to the universal ribosomal protein uL15 family. In terms of assembly, part of the 50S ribosomal subunit.

Functionally, binds to the 23S rRNA. In Azoarcus sp. (strain BH72), this protein is Large ribosomal subunit protein uL15.